We begin with the raw amino-acid sequence, 779 residues long: Endonuclease MutS2 (779 aa).

328–335 (GPNTGGKT) lines the ATP pocket. In terms of domain architecture, Smr spans 704 to 779 (LDLRGKRYEE…GSGATIVTLG (76 aa)).

Belongs to the DNA mismatch repair MutS family. MutS2 subfamily. In terms of assembly, homodimer. Binds to stalled ribosomes, contacting rRNA.

Its function is as follows. Endonuclease that is involved in the suppression of homologous recombination and thus may have a key role in the control of bacterial genetic diversity. In terms of biological role, acts as a ribosome collision sensor, splitting the ribosome into its 2 subunits. Detects stalled/collided 70S ribosomes which it binds and splits by an ATP-hydrolysis driven conformational change. Acts upstream of the ribosome quality control system (RQC), a ribosome-associated complex that mediates the extraction of incompletely synthesized nascent chains from stalled ribosomes and their subsequent degradation. Probably generates substrates for RQC. In Streptococcus pyogenes serotype M49 (strain NZ131), this protein is Endonuclease MutS2.